We begin with the raw amino-acid sequence, 609 residues long: Mitogen-activated protein kinase kinase kinase 3 (609 aa).

Residues methionine 1–glycine 202 are disordered. Residues lysine 11 to lysine 28 are compositionally biased toward basic and acidic residues. Low complexity-rich tracts occupy residues proline 40–serine 64 and valine 90–serine 108. The 257-residue stretch at tryptophan 214 to leucine 470 folds into the Protein kinase domain. Residues leucine 220–valine 228 and lysine 243 each bind ATP. Catalysis depends on aspartate 339, which acts as the Proton acceptor. Disordered stretches follow at residues proline 487–asparagine 511 and methionine 590–valine 609. Over residues serine 594 to valine 609 the composition is skewed to polar residues.

Belongs to the protein kinase superfamily. STE Ser/Thr protein kinase family. MAP kinase kinase kinase subfamily. As to quaternary structure, interacts with PBL27. Expressed in flower buds, roots, leaves, seedlings, stems and immature siliques. Absent of mature pollen.

The catalysed reaction is L-seryl-[protein] + ATP = O-phospho-L-seryl-[protein] + ADP + H(+). The enzyme catalyses L-threonyl-[protein] + ATP = O-phospho-L-threonyl-[protein] + ADP + H(+). In Arabidopsis thaliana (Mouse-ear cress), this protein is Mitogen-activated protein kinase kinase kinase 3.